A 420-amino-acid chain; its full sequence is Tyrosine--tRNA ligase (420 aa).

Residue Tyr-33 participates in L-tyrosine binding. The 'HIGH' region signature appears at 38 to 47 (PTADSLHIGH). L-tyrosine contacts are provided by Tyr-168 and Gln-172. The short motif at 231-235 (KFGKT) is the 'KMSKS' region element. An ATP-binding site is contributed by Lys-234. Positions 353–419 (MLLVDALIKV…GKKNYYLVKL (67 aa)) constitute an S4 RNA-binding domain.

It belongs to the class-I aminoacyl-tRNA synthetase family. TyrS type 1 subfamily. In terms of assembly, homodimer.

The protein resides in the cytoplasm. The catalysed reaction is tRNA(Tyr) + L-tyrosine + ATP = L-tyrosyl-tRNA(Tyr) + AMP + diphosphate + H(+). Functionally, catalyzes the attachment of tyrosine to tRNA(Tyr) in a two-step reaction: tyrosine is first activated by ATP to form Tyr-AMP and then transferred to the acceptor end of tRNA(Tyr). This Desulfitobacterium hafniense (strain Y51) protein is Tyrosine--tRNA ligase.